The chain runs to 472 residues: Sodium-coupled neutral amino acid transporter 5 (472 aa).

The residue at position 1 (Met1) is an N-acetylmethionine. The Cytoplasmic portion of the chain corresponds to 1-48; the sequence is MELQDPKMNGALPSDAVGYRQEREGFLPSRGPAPGSKPVQFMDFEGKT. Residues 49 to 71 traverse the membrane as a helical segment; sequence SFGMSVFNLSNAIMGSGILGLAY. Residues 72-87 lie on the Extracellular side of the membrane; it reads AMAHTGVIFFLALLLC. Residues 88 to 108 traverse the membrane as a helical segment; sequence IALLSSYSIHLLLTCAGIAGI. At 109–125 the chain is on the cytoplasmic side; the sequence is RAYEQLGQRAFGPAGKV. A helical transmembrane segment spans residues 126–146; sequence VVATVICLHNVGAMSSYLFII. The Extracellular segment spans residues 147–166; the sequence is KSELPLVIGTFLYMDPEGDW. Residues 167 to 187 form a helical membrane-spanning segment; sequence FLKGNLLIIIVSVLIILPLAL. The Cytoplasmic portion of the chain corresponds to 188-192; sequence MKHLG. Residues 193-213 form a helical membrane-spanning segment; it reads YLGYTSGLSLTCMLFFLVSVI. Residues 214–257 are Extracellular-facing; the sequence is YKKFQLGCAIGHNETAMESEALVGLPSQGLNSSCEAQMFTVDSQ. Cys221 and Cys247 are disulfide-bonded. The N-linked (GlcNAc...) asparagine glycan is linked to Asn226. Residues 258–278 form a helical membrane-spanning segment; that stretch reads MSYTVPIMAFAFVCHPEVLPI. The Cytoplasmic portion of the chain corresponds to 279–295; sequence YTELCRPSKRRMQAVAN. Residues 296–316 form a helical membrane-spanning segment; that stretch reads VSIGAMFCMYGLTATFGYLTF. Residues 317 to 334 are Extracellular-facing; the sequence is YSSVKAEMLHMYSQKDPL. The helical transmembrane segment at 335-355 threads the bilayer; sequence ILCVRLAVLLAVTLTVPVVLF. Topologically, residues 356 to 376 are cytoplasmic; sequence PIRRALQQLLFPGKAFSWPRH. The chain crosses the membrane as a helical span at residues 377–397; that stretch reads VAIALILLVLVNVLVICVPTI. The Extracellular portion of the chain corresponds to 398-399; it reads RD. Residues 400–420 form a helical membrane-spanning segment; the sequence is IFGVIGSTSAPSLIFILPSIF. At 421–439 the chain is on the cytoplasmic side; the sequence is YLRIVPSEVEPFLSWPKIQ. Residues 440–460 form a helical membrane-spanning segment; that stretch reads ALCFGVLGVLFMAVSLGFMFA. Topologically, residues 461–472 are extracellular; it reads NWATGQSRMSGH.

It belongs to the amino acid/polyamine transporter 2 family. Predominantly expressed in stomach, brain, liver, lung and intestinal tract.

It localises to the cell membrane. The catalysed reaction is L-serine(out) + Na(+)(out) + H(+)(in) = L-serine(in) + Na(+)(in) + H(+)(out). It carries out the reaction L-alanine(out) + Na(+)(out) + H(+)(in) = L-alanine(in) + Na(+)(in) + H(+)(out). It catalyses the reaction glycine(out) + Na(+)(out) + H(+)(in) = glycine(in) + Na(+)(in) + H(+)(out). The enzyme catalyses L-glutamine(out) + Na(+)(out) + H(+)(in) = L-glutamine(in) + Na(+)(in) + H(+)(out). The catalysed reaction is L-asparagine(out) + Na(+)(out) + H(+)(in) = L-asparagine(in) + Na(+)(in) + H(+)(out). It carries out the reaction L-histidine(out) + Na(+)(out) + H(+)(in) = L-histidine(in) + Na(+)(in) + H(+)(out). It catalyses the reaction L-cysteine(out) + Na(+)(out) + H(+)(in) = L-cysteine(in) + Na(+)(in) + H(+)(out). Its activity is regulated as follows. Not inhibited by lithium. Partial allosteric regulation on ions sodium binding. Functionally, symporter that cotransports neutral amino acids and sodium ions, coupled to an H(+) antiporter activity. Releases L-glutamine and glycine from astroglial cells and may participate in the glutamate/GABA-L-glutamine cycle and the NMDA receptors activation. In addition, contributes significantly to L-glutamine uptake in retina, namely in ganglion and Mueller cells therefore, participates in the retinal glutamate-glutamine cycle. The transport activity is pH sensitive and Li(+) tolerant. Moreover functions in both direction and is associated with large uncoupled fluxes of protons. The transport is electroneutral coupled to the cotransport of 1 Na(+) and the antiport of 1 H(+). May have a particular importance for modulation of net hepatic glutamine flux. In Homo sapiens (Human), this protein is Sodium-coupled neutral amino acid transporter 5 (SLC38A5).